We begin with the raw amino-acid sequence, 428 residues long: UDP-N-acetylglucosamine 1-carboxyvinyltransferase 2 (428 aa).

A phosphoenolpyruvate-binding site is contributed by 22–23 (KN). Arginine 92 provides a ligand contact to UDP-N-acetyl-alpha-D-glucosamine. The active-site Proton donor is the cysteine 116. Residue cysteine 116 is modified to 2-(S-cysteinyl)pyruvic acid O-phosphothioketal. UDP-N-acetyl-alpha-D-glucosamine contacts are provided by residues 121-125 (RPIDQ), aspartate 304, and isoleucine 326.

This sequence belongs to the EPSP synthase family. MurA subfamily.

It is found in the cytoplasm. It carries out the reaction phosphoenolpyruvate + UDP-N-acetyl-alpha-D-glucosamine = UDP-N-acetyl-3-O-(1-carboxyvinyl)-alpha-D-glucosamine + phosphate. Its pathway is cell wall biogenesis; peptidoglycan biosynthesis. Cell wall formation. Adds enolpyruvyl to UDP-N-acetylglucosamine. This Geobacillus kaustophilus (strain HTA426) protein is UDP-N-acetylglucosamine 1-carboxyvinyltransferase 2.